The sequence spans 130 residues: Small ribosomal subunit protein bS16 (130 aa).

Over residues Ala98–Glu109 the composition is skewed to basic and acidic residues. A disordered region spans residues Ala98–Gly130. The span at Ala110–Gly130 shows a compositional bias: low complexity.

It belongs to the bacterial ribosomal protein bS16 family.

The chain is Small ribosomal subunit protein bS16 from Synechococcus sp. (strain CC9902).